Consider the following 183-residue polypeptide: Crossover junction endodeoxyribonuclease RuvC (183 aa).

Catalysis depends on residues Asp-7, Glu-66, and Asp-138. 3 residues coordinate Mg(2+): Asp-7, Glu-66, and Asp-138.

It belongs to the RuvC family. In terms of assembly, homodimer which binds Holliday junction (HJ) DNA. The HJ becomes 2-fold symmetrical on binding to RuvC with unstacked arms; it has a different conformation from HJ DNA in complex with RuvA. In the full resolvosome a probable DNA-RuvA(4)-RuvB(12)-RuvC(2) complex forms which resolves the HJ. Mg(2+) serves as cofactor.

It is found in the cytoplasm. It catalyses the reaction Endonucleolytic cleavage at a junction such as a reciprocal single-stranded crossover between two homologous DNA duplexes (Holliday junction).. Functionally, the RuvA-RuvB-RuvC complex processes Holliday junction (HJ) DNA during genetic recombination and DNA repair. Endonuclease that resolves HJ intermediates. Cleaves cruciform DNA by making single-stranded nicks across the HJ at symmetrical positions within the homologous arms, yielding a 5'-phosphate and a 3'-hydroxyl group; requires a central core of homology in the junction. The consensus cleavage sequence is 5'-(A/T)TT(C/G)-3'. Cleavage occurs on the 3'-side of the TT dinucleotide at the point of strand exchange. HJ branch migration catalyzed by RuvA-RuvB allows RuvC to scan DNA until it finds its consensus sequence, where it cleaves and resolves the cruciform DNA. The polypeptide is Crossover junction endodeoxyribonuclease RuvC (Burkholderia ambifaria (strain MC40-6)).